Here is a 176-residue protein sequence, read N- to C-terminus: dCTP deaminase (176 aa).

Residues 99–104 and Asp-115 each bind dCTP; that span reads RSTLAR. Glu-125 serves as the catalytic Proton donor/acceptor. Gln-163 is a binding site for dCTP.

The protein belongs to the dCTP deaminase family. Homotrimer.

The enzyme catalyses dCTP + H2O + H(+) = dUTP + NH4(+). Its pathway is pyrimidine metabolism; dUMP biosynthesis; dUMP from dCTP (dUTP route): step 1/2. Catalyzes the deamination of dCTP to dUTP. This Pyrobaculum arsenaticum (strain DSM 13514 / JCM 11321 / PZ6) protein is dCTP deaminase.